An 87-amino-acid chain; its full sequence is Large ribosomal subunit protein bL27 (87 aa).

Belongs to the bacterial ribosomal protein bL27 family.

The polypeptide is Large ribosomal subunit protein bL27 (Phocaeicola vulgatus (strain ATCC 8482 / DSM 1447 / JCM 5826 / CCUG 4940 / NBRC 14291 / NCTC 11154) (Bacteroides vulgatus)).